The sequence spans 312 residues: Ribosomal RNA small subunit methyltransferase H (312 aa).

S-adenosyl-L-methionine contacts are provided by residues A34–H36, D54, F81, D102, and Q109.

The protein belongs to the methyltransferase superfamily. RsmH family.

It is found in the cytoplasm. It carries out the reaction cytidine(1402) in 16S rRNA + S-adenosyl-L-methionine = N(4)-methylcytidine(1402) in 16S rRNA + S-adenosyl-L-homocysteine + H(+). Its function is as follows. Specifically methylates the N4 position of cytidine in position 1402 (C1402) of 16S rRNA. The polypeptide is Ribosomal RNA small subunit methyltransferase H (Geobacter sp. (strain M21)).